A 698-amino-acid polypeptide reads, in one-letter code: Elongation factor G (698 aa).

The tr-type G domain maps to 6-281 (ENIRNIGICA…AVVDYLPSPI (276 aa)). GTP-binding positions include 15-22 (AHIDAGKT), 79-83 (DTPGH), and 133-136 (NKMD).

It belongs to the TRAFAC class translation factor GTPase superfamily. Classic translation factor GTPase family. EF-G/EF-2 subfamily.

The protein resides in the cytoplasm. In terms of biological role, catalyzes the GTP-dependent ribosomal translocation step during translation elongation. During this step, the ribosome changes from the pre-translocational (PRE) to the post-translocational (POST) state as the newly formed A-site-bound peptidyl-tRNA and P-site-bound deacylated tRNA move to the P and E sites, respectively. Catalyzes the coordinated movement of the two tRNA molecules, the mRNA and conformational changes in the ribosome. The polypeptide is Elongation factor G (Rickettsia bellii (strain RML369-C)).